The sequence spans 452 residues: MAAAALRSGWCRCPRRCLGSGIQFLSSHNLPHGSTYQMRRPGGELPLSKSYSSGNRKGFLSGLLDNVKQELAKNKEMKESIKKFRDEARRLEESDVLQEARRKYKTIESETVRTSEVLRKKLGELTGTVKESLHEVSKSDLGRKIKEGVEEAAKTAKQSAESVSKGGEKLGRTAAFRALSQGVESVKKEIDDSVLGQTGPYRRPQRLRKRTEFAGDKFKEEKVFEPNEEALGVVLHKDSKWYQQWKDFKENNVVFNRFFEMKMKYDESDNAFIRASRALTDKVTDLLGGLFSKTEMSEVLTEILRVDPAFDKDRFLKQCENDIIPNVLEAMISGELDILKDWCYEATYSQLAHPIQQAKALGLQFHSRILDIDNVDLAMGKMMEQGPVLIITFQAQLVMVVRNPKGEVVEGDPDKVLRMLYVWALCRDQDELNPYAAWRLLDISASSTEQIL.

The residue at position 128 (T128) is a Phosphothreonine. ATP is bound at residue 166–173 (GGEKLGRT). The residue at position 180 (S180) is a Phosphoserine. Residue K217 is modified to N6-succinyllysine.

Belongs to the Tim44 family. As to quaternary structure, probable component of the PAM complex at least composed of a mitochondrial HSP70 protein, GRPEL1 or GRPEL2, TIMM44, TIMM16/PAM16 and TIMM14/DNAJC19. The complex interacts with the TIMM23 component of the TIM23 complex. Interacts with SLC25A4/ANT1 and SLC25A5/ANT2; leading to inhibit the presequence translocase TIMM23, thereby promoting stabilization of PINK1.

The protein resides in the mitochondrion inner membrane. It is found in the mitochondrion matrix. Functionally, essential component of the PAM complex, a complex required for the translocation of transit peptide-containing proteins from the inner membrane into the mitochondrial matrix in an ATP-dependent manner. Recruits mitochondrial HSP70 to drive protein translocation into the matrix using ATP as an energy source. This Homo sapiens (Human) protein is Mitochondrial import inner membrane translocase subunit TIM44 (TIMM44).